The sequence spans 610 residues: Chaperone protein DnaK (610 aa).

Thr173 carries the phosphothreonine; by autocatalysis modification. Disordered regions lie at residues 525 to 544 (ENIG…ALKT) and 576 to 610 (AAQQ…DDKK). The segment covering 529–542 (EEDKKSAEEKKDAL) has biased composition (basic and acidic residues). The segment covering 576–592 (AAQQQQQAQGANAGQNN) has biased composition (low complexity). Residues 599 to 610 (AEFKEVKDDDKK) show a composition bias toward basic and acidic residues.

The protein belongs to the heat shock protein 70 family.

Its function is as follows. Acts as a chaperone. The sequence is that of Chaperone protein DnaK from Staphylococcus aureus (strain Mu3 / ATCC 700698).